We begin with the raw amino-acid sequence, 290 residues long: Elongation factor Ts (290 aa).

Positions 80–83 (TDFV) are involved in Mg(2+) ion dislocation from EF-Tu.

Belongs to the EF-Ts family.

The protein localises to the cytoplasm. Associates with the EF-Tu.GDP complex and induces the exchange of GDP to GTP. It remains bound to the aminoacyl-tRNA.EF-Tu.GTP complex up to the GTP hydrolysis stage on the ribosome. The protein is Elongation factor Ts of Neorickettsia sennetsu (strain ATCC VR-367 / Miyayama) (Ehrlichia sennetsu).